A 180-amino-acid chain; its full sequence is Peptide deformylase (180 aa).

Residues Cys88 and His130 each contribute to the Fe cation site. The active site involves Glu131. Residue His134 participates in Fe cation binding.

The protein belongs to the polypeptide deformylase family. The cofactor is Fe(2+).

The enzyme catalyses N-terminal N-formyl-L-methionyl-[peptide] + H2O = N-terminal L-methionyl-[peptide] + formate. Functionally, removes the formyl group from the N-terminal Met of newly synthesized proteins. Requires at least a dipeptide for an efficient rate of reaction. N-terminal L-methionine is a prerequisite for activity but the enzyme has broad specificity at other positions. The polypeptide is Peptide deformylase (Acidothermus cellulolyticus (strain ATCC 43068 / DSM 8971 / 11B)).